The following is a 324-amino-acid chain: MFDLDPINAAFYDQIKDLPCPHQMGGYQQAYDSLEQIQKHDAAPDIDTTTIQVGKRYGPTTVTLFRLKTLVDKPLPMVFYTHGGGWIMGSAKSFAVLMEDLARRTQAVIVFPDYTRVPHQTFPYPLEQSYEVLDYMVRHSNQHQILHGTIALAGDSVGGHMAIAMMQMSLERKLPTQIGQLVLWAPVTITYKKLGSYTTFSHAPFLTEDSMDWMIESFLPNKEDRQTALASPLTHLSDEVLAQFPPTIIFLSTVDPLLDEGVAFGHRLQKNGVDASIMKAEGQMHAFCAVKALRDGPTARAVIDLAALRLRRIFPQRDTPGHPS.

Residues Ser-156, Asp-255, and His-285 contribute to the active site.

The protein belongs to the AB hydrolase 3 family.

Esterase; part of the Fusarium detoxification of benzoxazolinone cluster involved in the degradation of benzoxazolinones produced by the host plant. Maize, wheat, and rye produce the 2 benzoxazinone phytoanticipins 2,4-dihy-droxy-7-methoxy-1,4-benzoxazin-3-one (DIMBOA) and 2,4-dihydroxy-1,4-benzoxazin-3-one (DIBOA) that, due to their inherent instability once released, spontaneously degrade to the more stable corresponding benzoxazolinones, 6-methoxy-2-benzoxazolinone (MBOA) and 2-benzoxazolinone (BOA), respectively. The first step in the detoxification of benzoxazolinones involves the hydrolysis of the cyclic ester bond of benzoxazolinones by the gamma-lactamase FDB1 to aminophenols. FDB1 is able to convert 2-benzoxazolinone (BOA) into 2-aminophenol (2-AP), as well as 6-methoxy-2-benzoxazolinone (MBOA) into 5-methoxy-2-aminophenol (2-AMP). The N-malonyltransferase FDB2 then metabolizes aminophenols via N-malonylation to non-toxic malonamic acids. FDB2 converts 2-AP into N-(2-hydroxyphenyl) malonamic acid (HPMA) and 2-AMP into N-(2-hydroxy-4-methoxyphenyl) malonamic acid (HMPMA). The cluster also contains 2 transcription factors (FDB3 and FPSE_08121), an aldo-keto reductase (FPSE_08125) that possibly associates with a ketone component of BOA and MBOA degradation, an esterase (FPSE_08126), an acyl-CoA transferase (FPSE_08120), a solute carrier protein (FPSE_08119) and a transmembrane transporter (FPSE_08127) proposed to shuttle metabolites of benzoxazolinone degradation. This is Esterase FPSE_08126 from Fusarium pseudograminearum (strain CS3096) (Wheat and barley crown-rot fungus).